We begin with the raw amino-acid sequence, 280 residues long: Pantothenate synthetase (280 aa).

Residue 30 to 37 (MGYLHEGH) coordinates ATP. Histidine 37 (proton donor) is an active-site residue. Residue glutamine 61 coordinates (R)-pantoate. Glutamine 61 provides a ligand contact to beta-alanine. 147-150 (GQKD) lines the ATP pocket. Glutamine 153 serves as a coordination point for (R)-pantoate. ATP is bound by residues valine 176 and 184-187 (MSSR).

Belongs to the pantothenate synthetase family. In terms of assembly, homodimer.

It localises to the cytoplasm. It catalyses the reaction (R)-pantoate + beta-alanine + ATP = (R)-pantothenate + AMP + diphosphate + H(+). It functions in the pathway cofactor biosynthesis; (R)-pantothenate biosynthesis; (R)-pantothenate from (R)-pantoate and beta-alanine: step 1/1. In terms of biological role, catalyzes the condensation of pantoate with beta-alanine in an ATP-dependent reaction via a pantoyl-adenylate intermediate. The chain is Pantothenate synthetase from Fervidobacterium nodosum (strain ATCC 35602 / DSM 5306 / Rt17-B1).